We begin with the raw amino-acid sequence, 540 residues long: Glucose-6-phosphate isomerase (540 aa).

Glu350 serves as the catalytic Proton donor. Catalysis depends on residues His381 and Lys503.

Belongs to the GPI family.

It is found in the cytoplasm. It carries out the reaction alpha-D-glucose 6-phosphate = beta-D-fructose 6-phosphate. It participates in carbohydrate biosynthesis; gluconeogenesis. It functions in the pathway carbohydrate degradation; glycolysis; D-glyceraldehyde 3-phosphate and glycerone phosphate from D-glucose: step 2/4. Its function is as follows. Catalyzes the reversible isomerization of glucose-6-phosphate to fructose-6-phosphate. This is Glucose-6-phosphate isomerase from Burkholderia pseudomallei (strain 668).